Reading from the N-terminus, the 401-residue chain is uncharacterized protein (401 aa).

A run of 10 helical transmembrane segments spans residues 20-40 (FFGE…MVLY), 49-69 (IMMP…LTLA), 83-100 (ILTA…FVFA), 104-121 (YVFA…SLYI), 140-160 (VFAV…LVGM), 167-187 (PVWI…IAAL), 207-227 (FTIY…SMLY), 248-268 (MLTI…VPLV), 289-309 (LAAA…TAAV), and 357-377 (GLIL…VCLL).

It belongs to the major facilitator superfamily.

The protein resides in the cell membrane. This is an uncharacterized protein from Bacillus subtilis (strain 168).